The primary structure comprises 677 residues: Methionine--tRNA ligase (677 aa).

The short motif at 15–25 (PYANGSIHLGH) is the 'HIGH' region element. Positions 146, 149, 159, and 162 each coordinate Zn(2+). Positions 333-337 (KMSKS) match the 'KMSKS' region motif. Lys-336 contributes to the ATP binding site. The region spanning 575-677 (DFAKIDLRVA…DGAKPGQQVK (103 aa)) is the tRNA-binding domain.

Belongs to the class-I aminoacyl-tRNA synthetase family. MetG type 1 subfamily. Homodimer. Requires Zn(2+) as cofactor.

Its subcellular location is the cytoplasm. It catalyses the reaction tRNA(Met) + L-methionine + ATP = L-methionyl-tRNA(Met) + AMP + diphosphate. Functionally, is required not only for elongation of protein synthesis but also for the initiation of all mRNA translation through initiator tRNA(fMet) aminoacylation. The chain is Methionine--tRNA ligase from Salmonella typhimurium (strain LT2 / SGSC1412 / ATCC 700720).